Reading from the N-terminus, the 607-residue chain is Elongation factor 4 (607 aa).

Positions 11 to 193 (EKIRNFSIIA…QIVEKVPAPT (183 aa)) constitute a tr-type G domain. Residues 23 to 28 (DHGKST) and 140 to 143 (NKID) each bind GTP.

Belongs to the TRAFAC class translation factor GTPase superfamily. Classic translation factor GTPase family. LepA subfamily.

Its subcellular location is the cell membrane. The enzyme catalyses GTP + H2O = GDP + phosphate + H(+). Functionally, required for accurate and efficient protein synthesis under certain stress conditions. May act as a fidelity factor of the translation reaction, by catalyzing a one-codon backward translocation of tRNAs on improperly translocated ribosomes. Back-translocation proceeds from a post-translocation (POST) complex to a pre-translocation (PRE) complex, thus giving elongation factor G a second chance to translocate the tRNAs correctly. Binds to ribosomes in a GTP-dependent manner. This chain is Elongation factor 4, found in Streptococcus pneumoniae (strain P1031).